Consider the following 124-residue polypeptide: Small ribosomal subunit protein uS12 (124 aa).

At Asp89 the chain carries 3-methylthioaspartic acid.

Belongs to the universal ribosomal protein uS12 family. In terms of assembly, part of the 30S ribosomal subunit. Contacts proteins S8 and S17. May interact with IF1 in the 30S initiation complex.

Functionally, with S4 and S5 plays an important role in translational accuracy. Interacts with and stabilizes bases of the 16S rRNA that are involved in tRNA selection in the A site and with the mRNA backbone. Located at the interface of the 30S and 50S subunits, it traverses the body of the 30S subunit contacting proteins on the other side and probably holding the rRNA structure together. The combined cluster of proteins S8, S12 and S17 appears to hold together the shoulder and platform of the 30S subunit. In Acinetobacter baylyi (strain ATCC 33305 / BD413 / ADP1), this protein is Small ribosomal subunit protein uS12.